The chain runs to 286 residues: Ribonuclease Z (286 aa).

Zn(2+)-binding residues include His61, His63, Asp65, His66, His153, Asp176, and His240. Asp65 (proton acceptor) is an active-site residue.

The protein belongs to the RNase Z family. As to quaternary structure, homodimer. It depends on Zn(2+) as a cofactor.

The enzyme catalyses Endonucleolytic cleavage of RNA, removing extra 3' nucleotides from tRNA precursor, generating 3' termini of tRNAs. A 3'-hydroxy group is left at the tRNA terminus and a 5'-phosphoryl group is left at the trailer molecule.. Zinc phosphodiesterase, which displays some tRNA 3'-processing endonuclease activity. Probably involved in tRNA maturation, by removing a 3'-trailer from precursor tRNA. This Mycolicibacterium gilvum (strain PYR-GCK) (Mycobacterium gilvum (strain PYR-GCK)) protein is Ribonuclease Z.